Reading from the N-terminus, the 233-residue chain is DNA repair protein RecO (233 aa).

The protein belongs to the RecO family.

In terms of biological role, involved in DNA repair and RecF pathway recombination. This Pseudomonas paraeruginosa (strain DSM 24068 / PA7) (Pseudomonas aeruginosa (strain PA7)) protein is DNA repair protein RecO.